The sequence spans 593 residues: Ribonuclease Y (593 aa).

A helical membrane pass occupies residues 6–26; sequence ILLMYLIVGLLTALTVLIFVF. Residues 218-278 form the KH domain; it reads DPIKVKKVTD…IKLEVAYNAL (61 aa). One can recognise an HD domain in the interval 354 to 464; sequence VLTHSIEAAQ…TKIADFLSAA (111 aa).

Belongs to the RNase Y family.

It localises to the cell membrane. Its function is as follows. Endoribonuclease that initiates mRNA decay. In Mycoplasmoides gallisepticum (strain R(low / passage 15 / clone 2)) (Mycoplasma gallisepticum), this protein is Ribonuclease Y.